A 300-amino-acid polypeptide reads, in one-letter code: tRNA dimethylallyltransferase (300 aa).

9-16 (GTTASGKS) is an ATP binding site. A substrate-binding site is contributed by 11 to 16 (TASGKS). The segment at 34-37 (DSLC) is interaction with substrate tRNA.

Belongs to the IPP transferase family. In terms of assembly, monomer. The cofactor is Mg(2+).

It catalyses the reaction adenosine(37) in tRNA + dimethylallyl diphosphate = N(6)-dimethylallyladenosine(37) in tRNA + diphosphate. In terms of biological role, catalyzes the transfer of a dimethylallyl group onto the adenine at position 37 in tRNAs that read codons beginning with uridine, leading to the formation of N6-(dimethylallyl)adenosine (i(6)A). The chain is tRNA dimethylallyltransferase from Campylobacter fetus subsp. fetus (strain 82-40).